Reading from the N-terminus, the 319-residue chain is MKTFGKKVVLIGDGSVGSSYAFAMVTQGVADEFVIIDIAKDKVKADVQDLNHGTVHSPSPVDVKAGEYEDCKDADLVVITAGAPQKPGETRLQLVEKNTKIMKSIVKSVMDSGFDGYFLIAANPVDILTRFVKEYTGLPAERVIGSGTVLDSARLQYLISQELGVAPSSVDASIIGEHGDTELAVWSQANVAGISVYDTLKEQTGSEAKAEEIYVNTRDAAYEIIQAKGSTYYGIALALMRISKAILNNENNVLNVSIQLDGQYGGHKGVYLGVPTLVNQHGAVKIYEMPLSAEEQALFDKSVKTLEDTFDSIKYLLED.

NAD(+)-binding positions include valine 16, aspartate 37, lysine 42, tyrosine 68, and 82–83 (GA). 2 residues coordinate substrate: glutamine 85 and arginine 91. Residues serine 104, 121-123 (AAN), and serine 146 each bind NAD(+). Residue 123–126 (NPVD) coordinates substrate. 151–154 (DSAR) lines the substrate pocket. Histidine 178 serves as the catalytic Proton acceptor. The residue at position 222 (tyrosine 222) is a Phosphotyrosine. Threonine 231 provides a ligand contact to substrate.

It belongs to the LDH/MDH superfamily. LDH family. Homotetramer.

Its subcellular location is the cytoplasm. It catalyses the reaction (S)-lactate + NAD(+) = pyruvate + NADH + H(+). The protein operates within fermentation; pyruvate fermentation to lactate; (S)-lactate from pyruvate: step 1/1. Its function is as follows. Catalyzes the conversion of lactate to pyruvate (Potential). Contributes to S.aureus growth during nitrosative stress in both aerobically and anaerobically cultured cells, despite playing a secondary role in this resistance mechanism. The polypeptide is L-lactate dehydrogenase 2 (Staphylococcus aureus (strain USA300)).